The following is a 291-amino-acid chain: Methionine aminopeptidase (291 aa).

H118 provides a ligand contact to substrate. A divalent metal cation contacts are provided by D135, D146, and H209. H216 is a substrate binding site. A divalent metal cation contacts are provided by E241 and E273.

This sequence belongs to the peptidase M24A family. Methionine aminopeptidase type 1 subfamily. Monomer. Co(2+) is required as a cofactor. Zn(2+) serves as cofactor. Requires Mn(2+) as cofactor. It depends on Fe(2+) as a cofactor.

The catalysed reaction is Release of N-terminal amino acids, preferentially methionine, from peptides and arylamides.. Removes the N-terminal methionine from nascent proteins. The N-terminal methionine is often cleaved when the second residue in the primary sequence is small and uncharged (Met-Ala-, Cys, Gly, Pro, Ser, Thr, or Val). Requires deformylation of the N(alpha)-formylated initiator methionine before it can be hydrolyzed. The protein is Methionine aminopeptidase of Chlamydia muridarum (strain MoPn / Nigg).